The chain runs to 81 residues: Photosystem I iron-sulfur center (81 aa).

2 4Fe-4S ferredoxin-type domains span residues 2–31 (AHAVKIYDTCIGCTQCVRACPTDVLEMIPW) and 39–68 (IASAPRTEDCVGCKRCESRCPTDFLSVRVY). Positions 11, 14, 17, 21, 48, 51, 54, and 58 each coordinate [4Fe-4S] cluster.

In terms of assembly, the eukaryotic PSI reaction center is composed of at least 11 subunits. [4Fe-4S] cluster is required as a cofactor.

It is found in the plastid. The protein localises to the chloroplast thylakoid membrane. The catalysed reaction is reduced [plastocyanin] + hnu + oxidized [2Fe-2S]-[ferredoxin] = oxidized [plastocyanin] + reduced [2Fe-2S]-[ferredoxin]. Functionally, apoprotein for the two 4Fe-4S centers FA and FB of photosystem I (PSI); essential for photochemical activity. FB is the terminal electron acceptor of PSI, donating electrons to ferredoxin. The C-terminus interacts with PsaA/B/D and helps assemble the protein into the PSI complex. Required for binding of PsaD and PsaE to PSI. PSI is a plastocyanin-ferredoxin oxidoreductase, converting photonic excitation into a charge separation, which transfers an electron from the donor P700 chlorophyll pair to the spectroscopically characterized acceptors A0, A1, FX, FA and FB in turn. The polypeptide is Photosystem I iron-sulfur center (Marchantia polymorpha (Common liverwort)).